Here is a 763-residue protein sequence, read N- to C-terminus: Dual specificity tyrosine-phosphorylation-regulated kinase 1A (763 aa).

Position 14 is a phosphoserine (Ser-14). Residues 33–56 (QMPHSHQYSDRRQPNISDQQVSAL) form a disordered region. Residues 46–56 (PNISDQQVSAL) show a composition bias toward polar residues. Tyr-111 bears the Phosphotyrosine; by autocatalysis mark. The interval 115 to 136 (KKRRHQQGQGDDSSHKKERKVY) is disordered. Residues 117 to 134 (RRHQQGQGDDSSHKKERK) carry the Bipartite nuclear localization signal motif. Position 140 is a phosphotyrosine; by autocatalysis (Tyr-140). Tyr-145 carries the phosphotyrosine modification. Position 159 is a phosphotyrosine; by autocatalysis (Tyr-159). In terms of domain architecture, Protein kinase spans 159-479 (YEIDSLIGKG…PYYALQHSFF (321 aa)). 165-173 (IGKGSFGQV) contributes to the ATP binding site. The residue at position 177 (Tyr-177) is a Phosphotyrosine; by autocatalysis. Residue Lys-188 participates in ATP binding. Tyr-219 bears the Phosphotyrosine; by autocatalysis mark. 238–241 (FEML) contacts ATP. The active-site Proton acceptor is Asp-287. The residue at position 310 (Ser-310) is a Phosphoserine; by autocatalysis. Residues Tyr-319 and Tyr-321 each carry the phosphotyrosine; by autocatalysis modification. At Thr-402 the chain carries Phosphothreonine; by autocatalysis. A disordered region spans residues 408-442 (TKDGKREYKPPGTRKLHNILGVETGGPGGRRAGES). Residue Tyr-449 is modified to Phosphotyrosine; by autocatalysis. Residues 485–501 (EGTNTSNSVSTSPAMEQ) show a composition bias toward polar residues. Disordered regions lie at residues 485-540 (EGTN…HSGG), 596-679 (NALH…GNQA), and 744-763 (DREE…VASS). Positions 502-525 (SQSSGTTSSTSSSSGGSSGTSNSG) are enriched in low complexity. Residues Ser-529 and Ser-538 each carry the phosphoserine modification. The segment at 595–625 (QNALHHHHGNSSHHHHHHHHHHHHHGQQALG) is histidine-rich domain (HRD). Over residues 598–620 (LHHHHGNSSHHHHHHHHHHHHHG) the composition is skewed to basic residues. A compositionally biased stretch (polar residues) spans 634 to 645 (NSPTNSSSTQDS). Low complexity predominate over residues 654–672 (SMTSLSSSTTSSSTSSSST). Residues Ser-748 and Ser-758 each carry the phosphoserine modification. Over residues 754–763 (CVQQSPVASS) the composition is skewed to polar residues.

The protein belongs to the protein kinase superfamily. CMGC Ser/Thr protein kinase family. MNB/DYRK subfamily. As to quaternary structure, interacts with RAD54L2/ARIP4. Interacts with CRY2. Interacts with RANBP9. Interacts with WDR68. Interacts with SIRT1. Post-translationally, can also autophosphorylate on serine and threonine residues (in vitro). Autophosphorylated on numerous tyrosine residues. As to expression, detected in brain (at protein level). Ubiquitous.

It localises to the nucleus speckle. The enzyme catalyses L-seryl-[protein] + ATP = O-phospho-L-seryl-[protein] + ADP + H(+). It carries out the reaction L-threonyl-[protein] + ATP = O-phospho-L-threonyl-[protein] + ADP + H(+). It catalyses the reaction L-tyrosyl-[protein] + ATP = O-phospho-L-tyrosyl-[protein] + ADP + H(+). The catalysed reaction is [DNA-directed RNA polymerase] + ATP = phospho-[DNA-directed RNA polymerase] + ADP + H(+). With respect to regulation, inhibited by RANBP9. Inhibited by harmine, leucettamine B and leucettine L41. Its function is as follows. Dual-specificity kinase which possesses both serine/threonine and tyrosine kinase activities. Exhibits a substrate preference for proline at position P+1 and arginine at position P-3. Plays an important role in double-strand breaks (DSBs) repair following DNA damage. Mechanistically, phosphorylates RNF169 and increases its ability to block accumulation of TP53BP1 at the DSB sites thereby promoting homologous recombination repair (HRR). Also acts as a positive regulator of transcription by acting as a CTD kinase that mediates phosphorylation of the CTD (C-terminal domain) of the large subunit of RNA polymerase II (RNAP II) POLR2A. May play a role in a signaling pathway regulating nuclear functions of cell proliferation. Modulates alternative splicing by phosphorylating the splice factor SRSF6. Has pro-survival function and negatively regulates the apoptotic process. Promotes cell survival upon genotoxic stress through phosphorylation of SIRT1. This in turn inhibits p53/TP53 activity and apoptosis. Phosphorylates SEPTIN4, SEPTIN5 and SF3B1 at 'Thr-434'. The polypeptide is Dual specificity tyrosine-phosphorylation-regulated kinase 1A (Dyrk1a) (Rattus norvegicus (Rat)).